Reading from the N-terminus, the 253-residue chain is 5'/3'-nucleotidase SurE (253 aa).

Residues Asp8, Asp9, Ser39, and Asn92 each coordinate a divalent metal cation.

The protein belongs to the SurE nucleotidase family. It depends on a divalent metal cation as a cofactor.

It localises to the cytoplasm. It catalyses the reaction a ribonucleoside 5'-phosphate + H2O = a ribonucleoside + phosphate. The catalysed reaction is a ribonucleoside 3'-phosphate + H2O = a ribonucleoside + phosphate. It carries out the reaction [phosphate](n) + H2O = [phosphate](n-1) + phosphate + H(+). In terms of biological role, nucleotidase with a broad substrate specificity as it can dephosphorylate various ribo- and deoxyribonucleoside 5'-monophosphates and ribonucleoside 3'-monophosphates with highest affinity to 3'-AMP. Also hydrolyzes polyphosphate (exopolyphosphatase activity) with the preference for short-chain-length substrates (P20-25). Might be involved in the regulation of dNTP and NTP pools, and in the turnover of 3'-mononucleotides produced by numerous intracellular RNases (T1, T2, and F) during the degradation of various RNAs. The chain is 5'/3'-nucleotidase SurE from Salmonella arizonae (strain ATCC BAA-731 / CDC346-86 / RSK2980).